We begin with the raw amino-acid sequence, 699 residues long: UvrABC system protein C (699 aa).

A compositionally biased stretch (low complexity) spans 1–51 (MIQHPTDTPEVAADAAAEPERAAGAAGATPQPSQDAVEPAADVDAATASLA). Positions 1-59 (MIQHPTDTPEVAADAAAEPERAAGAAGATPQPSQDAVEPAADVDAATASLAAEDDDEPV) are disordered. The region spanning 92–170 (TSPGVYRMLN…IKQLRPRFNV (79 aa)) is the GIY-YIG domain. Residues 280 to 315 (RLVKQELAGEMEKASAELEFETAALYRDRLAALSAI) form the UVR domain.

Belongs to the UvrC family. In terms of assembly, interacts with UvrB in an incision complex.

The protein localises to the cytoplasm. Functionally, the UvrABC repair system catalyzes the recognition and processing of DNA lesions. UvrC both incises the 5' and 3' sides of the lesion. The N-terminal half is responsible for the 3' incision and the C-terminal half is responsible for the 5' incision. The polypeptide is UvrABC system protein C (Rhodopseudomonas palustris (strain BisB18)).